A 104-amino-acid polypeptide reads, in one-letter code: Large ribosomal subunit protein uL24 (104 aa).

It belongs to the universal ribosomal protein uL24 family. As to quaternary structure, part of the 50S ribosomal subunit.

One of two assembly initiator proteins, it binds directly to the 5'-end of the 23S rRNA, where it nucleates assembly of the 50S subunit. Its function is as follows. One of the proteins that surrounds the polypeptide exit tunnel on the outside of the subunit. The chain is Large ribosomal subunit protein uL24 from Flavobacterium psychrophilum (strain ATCC 49511 / DSM 21280 / CIP 103535 / JIP02/86).